The following is a 261-amino-acid chain: Carbonic anhydrase 1 (261 aa).

A2 carries the post-translational modification N-acetylalanine. The region spanning 4–261 (PDWGYDGENG…LKGRTVKASF (258 aa)) is the Alpha-carbonic anhydrase domain. The disordered stretch occupies residues 22 to 41 (PIANGNNQSPIDIKTSETKR). The active-site Proton donor/acceptor is the H65. Zn(2+) contacts are provided by H95, H97, and H120. Residues T200 and 200-201 (TH) contribute to the substrate site.

It belongs to the alpha-carbonic anhydrase family. Requires Zn(2+) as cofactor.

Its subcellular location is the cytoplasm. It catalyses the reaction hydrogencarbonate + H(+) = CO2 + H2O. The catalysed reaction is urea = cyanamide + H2O. With respect to regulation, inhibited by acetazolamide. Catalyzes the reversible hydration of carbon dioxide. Can hydrate cyanamide to urea. This is Carbonic anhydrase 1 (CA1) from Ovis aries (Sheep).